The following is a 502-amino-acid chain: ATP synthase subunit alpha, chloroplastic (502 aa).

170-177 (GDRQTGKT) is an ATP binding site.

It belongs to the ATPase alpha/beta chains family. In terms of assembly, F-type ATPases have 2 components, CF(1) - the catalytic core - and CF(0) - the membrane proton channel. CF(1) has five subunits: alpha(3), beta(3), gamma(1), delta(1), epsilon(1). CF(0) has four main subunits: a, b, b' and c.

Its subcellular location is the plastid. It is found in the chloroplast thylakoid membrane. The catalysed reaction is ATP + H2O + 4 H(+)(in) = ADP + phosphate + 5 H(+)(out). Its function is as follows. Produces ATP from ADP in the presence of a proton gradient across the membrane. The alpha chain is a regulatory subunit. This chain is ATP synthase subunit alpha, chloroplastic, found in Tupiella akineta (Green alga).